We begin with the raw amino-acid sequence, 378 residues long: C-type lectin domain family 17, member A (378 aa).

Residues 1–119 (MHNLYSITGY…PPLPCKPRNM (119 aa)) form a disordered region. Over 1–172 (MHNLYSITGY…GCCQKRWMVY (172 aa)) the chain is Cytoplasmic. Composition is skewed to acidic residues over residues 17–27 (MEEEEEDDDYE), 43–53 (MEEEEEDDDYE), and 69–79 (MEEEEEDDDYE). The segment covering 86-101 (KDLPPKPGSSAPPRPP) has biased composition (pro residues). The chain crosses the membrane as a helical; Signal-anchor for type II membrane protein span at residues 173 to 193 (LCLLVVTSLFLGCLGLTVTLI). The Extracellular segment spans residues 194 to 378 (KYQELMEELR…YWICERKCSC (185 aa)). N-linked (GlcNAc...) asparagine glycans are attached at residues Asn215 and Asn237. Intrachain disulfides connect Cys254–Cys265, Cys282–Cys372, and Cys350–Cys364. A C-type lectin domain is found at 261–373 (FEGKCYYFSP…CYKTTYWICE (113 aa)). Asn285 carries N-linked (GlcNAc...) asparagine glycosylation. Glu341, Asn343, Glu348, Asn360, and Asp361 together coordinate Ca(2+).

Oligomer; disulfide-linked. Post-translationally, phosphorylated on tyrosine residues. Expressed on dividing B-cells of germinal centers in various tissues, including lymph nodes, tonsils, stomach, intestine, appendix and spleen.

It localises to the membrane. In terms of biological role, cell surface receptor which may be involved in carbohydrate-mediated communication between cells in the germinal center. Binds glycans with terminal alpha-linked mannose or fucose residues. This is C-type lectin domain family 17, member A (CLEC17A) from Homo sapiens (Human).